The following is a 169-amino-acid chain: Sorting nexin-24 (169 aa).

Met-1 is modified (N-acetylmethionine). Positions 1-125 (MEVYIPSFRH…SFDETESEES (125 aa)) constitute a PX domain. A 1,2-diacyl-sn-glycero-3-phospho-(1D-myo-inositol-3-phosphate)-binding residues include Arg-38, Ser-40, Lys-61, and Arg-74. Residues Ser-113 and Ser-116 each carry the phosphoserine modification.

It belongs to the sorting nexin family.

The protein resides in the cytoplasmic vesicle membrane. May be involved in several stages of intracellular trafficking. This is Sorting nexin-24 (Snx24) from Rattus norvegicus (Rat).